We begin with the raw amino-acid sequence, 353 residues long: Photosystem II protein D1 (353 aa).

The residue at position 2 (threonine 2) is an N-acetylthreonine. Threonine 2 carries the post-translational modification Phosphothreonine. The next 3 membrane-spanning stretches (helical) occupy residues 29–46 (YIGWFGVLMIPTLLTATS), 118–133 (HFLLGVACYMGREWEL), and 142–156 (WIVVAYSAPVAAATA). A chlorophyll a-binding site is contributed by histidine 118. Tyrosine 126 lines the pheophytin a pocket. Residues aspartate 170 and glutamate 189 each contribute to the [CaMn4O5] cluster site. Residues 197-218 (FHMLGVAGVFGGSLFSAMHGSL) traverse the membrane as a helical segment. Histidine 198 is a binding site for chlorophyll a. A quinone-binding positions include histidine 215 and 264 to 265 (SF). Histidine 215 serves as a coordination point for Fe cation. Histidine 272 contacts Fe cation. The chain crosses the membrane as a helical span at residues 274–288 (FLAAWPVVGIWFTAL). [CaMn4O5] cluster contacts are provided by histidine 332, glutamate 333, aspartate 342, and alanine 344. Positions 345–353 (AVDAPSISG) are excised as a propeptide.

It belongs to the reaction center PufL/M/PsbA/D family. In terms of assembly, PSII is composed of 1 copy each of membrane proteins PsbA, PsbB, PsbC, PsbD, PsbE, PsbF, PsbH, PsbI, PsbJ, PsbK, PsbL, PsbM, PsbT, PsbX, PsbY, PsbZ, Psb30/Ycf12, at least 3 peripheral proteins of the oxygen-evolving complex and a large number of cofactors. It forms dimeric complexes. Requires The D1/D2 heterodimer binds P680, chlorophylls that are the primary electron donor of PSII, and subsequent electron acceptors. It shares a non-heme iron and each subunit binds pheophytin, quinone, additional chlorophylls, carotenoids and lipids. D1 provides most of the ligands for the Mn4-Ca-O5 cluster of the oxygen-evolving complex (OEC). There is also a Cl(-1) ion associated with D1 and D2, which is required for oxygen evolution. The PSII complex binds additional chlorophylls, carotenoids and specific lipids. as cofactor. Post-translationally, tyr-161 forms a radical intermediate that is referred to as redox-active TyrZ, YZ or Y-Z. In terms of processing, C-terminally processed by CTPA; processing is essential to allow assembly of the oxygen-evolving complex and thus photosynthetic growth.

Its subcellular location is the plastid. The protein localises to the chloroplast thylakoid membrane. The enzyme catalyses 2 a plastoquinone + 4 hnu + 2 H2O = 2 a plastoquinol + O2. Photosystem II (PSII) is a light-driven water:plastoquinone oxidoreductase that uses light energy to abstract electrons from H(2)O, generating O(2) and a proton gradient subsequently used for ATP formation. It consists of a core antenna complex that captures photons, and an electron transfer chain that converts photonic excitation into a charge separation. The D1/D2 (PsbA/PsbD) reaction center heterodimer binds P680, the primary electron donor of PSII as well as several subsequent electron acceptors. This Vicia faba (Broad bean) protein is Photosystem II protein D1.